A 499-amino-acid polypeptide reads, in one-letter code: Probable cytosol aminopeptidase (499 aa).

Mn(2+) is bound by residues lysine 263 and aspartate 268. Residue lysine 275 is part of the active site. The Mn(2+) site is built by aspartate 286, aspartate 345, and glutamate 347. Arginine 349 is a catalytic residue.

The protein belongs to the peptidase M17 family. It depends on Mn(2+) as a cofactor.

It localises to the cytoplasm. It carries out the reaction Release of an N-terminal amino acid, Xaa-|-Yaa-, in which Xaa is preferably Leu, but may be other amino acids including Pro although not Arg or Lys, and Yaa may be Pro. Amino acid amides and methyl esters are also readily hydrolyzed, but rates on arylamides are exceedingly low.. The enzyme catalyses Release of an N-terminal amino acid, preferentially leucine, but not glutamic or aspartic acids.. Presumably involved in the processing and regular turnover of intracellular proteins. Catalyzes the removal of unsubstituted N-terminal amino acids from various peptides. This chain is Probable cytosol aminopeptidase (pepA), found in Chlamydia trachomatis serovar D (strain ATCC VR-885 / DSM 19411 / UW-3/Cx).